Here is a 459-residue protein sequence, read N- to C-terminus: Anthocyanidin 3-O-glucoside 2''-O-glucosyltransferase (459 aa).

The Proton acceptor role is filled by His-20. His-20 contributes to the an anthocyanidin binding site. Asp-117 (charge relay) is an active-site residue. Thr-138, Val-335, Gln-337, His-352, Trp-355, Ser-357, and Glu-360 together coordinate UDP-alpha-D-glucose. An anthocyanidin is bound at residue Gly-375. Residues Asp-376 and Gln-377 each coordinate UDP-alpha-D-glucose.

It belongs to the UDP-glycosyltransferase family.

It catalyses the reaction an anthocyanidin 3-O-beta-D-glucoside + UDP-alpha-D-glucose = an anthocyanidin 3-O-sophoroside + UDP + 2 H(+). Its pathway is pigment biosynthesis; anthocyanin biosynthesis. Glycosyltransferase that mediates the glucosylation of anthocyanidin 3-O-glucosides to yield anthocyanidin 3-O-sophorosides. 3-O-sophoroside derivatives are required for the color of flowers. The chain is Anthocyanidin 3-O-glucoside 2''-O-glucosyltransferase (3GGT) from Ipomoea purpurea (Common morning glory).